The chain runs to 450 residues: Phosphoglucosamine mutase (450 aa).

The Phosphoserine intermediate role is filled by Ser-101. Ser-101, Asp-240, Asp-242, and Asp-244 together coordinate Mg(2+). Ser-101 is subject to Phosphoserine.

The protein belongs to the phosphohexose mutase family. The cofactor is Mg(2+). Post-translationally, activated by phosphorylation.

The catalysed reaction is alpha-D-glucosamine 1-phosphate = D-glucosamine 6-phosphate. Functionally, catalyzes the conversion of glucosamine-6-phosphate to glucosamine-1-phosphate. The sequence is that of Phosphoglucosamine mutase from Streptococcus uberis (strain ATCC BAA-854 / 0140J).